The chain runs to 145 residues: MSLYHYFRPAQRSVFGDLMRDMALMERQFAPVCRISPSESSEIVNNDQKFAINLNVSQFKPEDLKINLDGRTLSIQGEQELKTDHGYSKKSFSRVILLPEDVDVGAVASNLSEDGKLSIEAPKKEAVQGRSIPIQQAIVEEKSAE.

Positions 32-137 (VCRISPSESS…QGRSIPIQQA (106 aa)) constitute a sHSP domain.

Belongs to the small heat shock protein (HSP20) family.

This is Heat shock protein hsp-16.2 from Caenorhabditis elegans.